A 244-amino-acid chain; its full sequence is Flavin-dependent thymidylate synthase (244 aa).

The ThyX domain occupies 2-207 (VRVTLVNYTR…ELRPIIKWAK (206 aa)). FAD-binding positions include serine 56, 80 to 82 (RHR), and glutamine 88. DUMP-binding positions include 77–80 (QLVR), 88–92 (QQSQR), and arginine 146. A ThyX motif motif is present at residues 80 to 90 (RHRIASYTQQS). FAD-binding positions include 162-164 (NLR) and histidine 168. Arginine 173 is a binding site for dUMP. Arginine 173 functions as the Involved in ionization of N3 of dUMP, leading to its activation in the catalytic mechanism.

Belongs to the thymidylate synthase ThyX family. Homotetramer. It depends on FAD as a cofactor.

The catalysed reaction is dUMP + (6R)-5,10-methylene-5,6,7,8-tetrahydrofolate + NADPH + H(+) = dTMP + (6S)-5,6,7,8-tetrahydrofolate + NADP(+). Its pathway is pyrimidine metabolism; dTTP biosynthesis. In terms of biological role, catalyzes the reductive methylation of 2'-deoxyuridine-5'-monophosphate (dUMP) to 2'-deoxythymidine-5'-monophosphate (dTMP) while utilizing 5,10-methylenetetrahydrofolate (mTHF) as the methyl donor, and NADPH and FADH(2) as the reductant. This is Flavin-dependent thymidylate synthase from Pyrococcus abyssi (strain GE5 / Orsay).